A 342-amino-acid chain; its full sequence is Protease HtpX homolog (342 aa).

Helical transmembrane passes span 6-26 (TAML…LIGG) and 28-48 (GGMM…YWNS). His-130 lines the Zn(2+) pocket. Residue Glu-131 is part of the active site. Residue His-134 participates in Zn(2+) binding. A run of 2 helical transmembrane segments spans residues 145–165 (ITAT…FFGG) and 173–193 (GGGI…AMLV). Position 202 (Glu-202) interacts with Zn(2+). The disordered stretch occupies residues 290-342 (PQHSKPAASGPWGSSAERSTDDPWGVKGGASTRSVPKIGRRGKDNDAPKGPWN).

This sequence belongs to the peptidase M48B family. Zn(2+) is required as a cofactor.

It localises to the cell inner membrane. This is Protease HtpX homolog from Allorhizobium ampelinum (strain ATCC BAA-846 / DSM 112012 / S4) (Agrobacterium vitis (strain S4)).